A 61-amino-acid polypeptide reads, in one-letter code: Large ribosomal subunit protein uL30 (61 aa).

This sequence belongs to the universal ribosomal protein uL30 family. As to quaternary structure, part of the 50S ribosomal subunit.

This is Large ribosomal subunit protein uL30 from Corynebacterium urealyticum (strain ATCC 43042 / DSM 7109).